The primary structure comprises 246 residues: Isoamyl acetate-hydrolyzing esterase (246 aa).

The active-site Nucleophile is the Ser46. The active-site Proton donor is the Asp201. Catalysis depends on His204, which acts as the Proton acceptor.

This sequence belongs to the 'GDSL' lipolytic enzyme family. IAH1 subfamily.

The protein resides in the cytoplasm. It carries out the reaction 3-methylbutyl acetate + H2O = 3-methylbutanol + acetate + H(+). This is Isoamyl acetate-hydrolyzing esterase (iah1) from Schizosaccharomyces pombe (strain 972 / ATCC 24843) (Fission yeast).